The sequence spans 492 residues: Catalase-3 (492 aa).

Active-site residues include His-65 and Asn-138. Tyr-348 is a heme binding site.

It belongs to the catalase family. Homotetramer and heterotetramer. At least six or seven isozymes are produced from a mixture of 3 gene products. Interacts with NCA1. Interacts with LSD1. The cofactor is heme.

The protein resides in the peroxisome. The enzyme catalyses 2 H2O2 = O2 + 2 H2O. In terms of biological role, occurs in almost all aerobically respiring organisms and serves to protect cells from the toxic effects of hydrogen peroxide. The chain is Catalase-3 (CAT3) from Arabidopsis thaliana (Mouse-ear cress).